Consider the following 593-residue polypeptide: Methionine--tRNA ligase (593 aa).

The 'HIGH' region signature appears at 7-17; the sequence is PYANGPRHIGH. Residues C139, C142, C152, and C155 each coordinate Zn(2+). Residues 343-347 carry the 'KMSKS' region motif; the sequence is KFSTS. T346 serves as a coordination point for ATP.

This sequence belongs to the class-I aminoacyl-tRNA synthetase family. MetG type 1 subfamily. As to quaternary structure, monomer. The cofactor is Zn(2+).

The protein resides in the cytoplasm. The catalysed reaction is tRNA(Met) + L-methionine + ATP = L-methionyl-tRNA(Met) + AMP + diphosphate. In terms of biological role, is required not only for elongation of protein synthesis but also for the initiation of all mRNA translation through initiator tRNA(fMet) aminoacylation. This chain is Methionine--tRNA ligase, found in Saccharopolyspora erythraea (strain ATCC 11635 / DSM 40517 / JCM 4748 / NBRC 13426 / NCIMB 8594 / NRRL 2338).